We begin with the raw amino-acid sequence, 505 residues long: ATP synthase subunit alpha, chloroplastic (505 aa).

Residue 170–177 (GDRQTGKT) coordinates ATP.

The protein belongs to the ATPase alpha/beta chains family. F-type ATPases have 2 components, CF(1) - the catalytic core - and CF(0) - the membrane proton channel. CF(1) has five subunits: alpha(3), beta(3), gamma(1), delta(1), epsilon(1). CF(0) has four main subunits: a, b, b' and c.

It is found in the plastid. It localises to the chloroplast thylakoid membrane. The catalysed reaction is ATP + H2O + 4 H(+)(in) = ADP + phosphate + 5 H(+)(out). Produces ATP from ADP in the presence of a proton gradient across the membrane. The alpha chain is a regulatory subunit. In Oenothera parviflora (Small-flowered evening primrose), this protein is ATP synthase subunit alpha, chloroplastic.